A 282-amino-acid polypeptide reads, in one-letter code: Release factor glutamine methyltransferase (282 aa).

Residues Asp141, Phe169, and Asn186 each coordinate S-adenosyl-L-methionine. Residue 186-189 (NPPY) participates in substrate binding.

The protein belongs to the protein N5-glutamine methyltransferase family. PrmC subfamily.

It catalyses the reaction L-glutaminyl-[peptide chain release factor] + S-adenosyl-L-methionine = N(5)-methyl-L-glutaminyl-[peptide chain release factor] + S-adenosyl-L-homocysteine + H(+). In terms of biological role, methylates the class 1 translation termination release factors RF1/PrfA and RF2/PrfB on the glutamine residue of the universally conserved GGQ motif. This chain is Release factor glutamine methyltransferase, found in Mycoplasma mycoides subsp. mycoides SC (strain CCUG 32753 / NCTC 10114 / PG1).